A 227-amino-acid chain; its full sequence is Translation initiation factor 6 (227 aa).

The protein belongs to the eIF-6 family.

Its function is as follows. Binds to the 50S ribosomal subunit and prevents its association with the 30S ribosomal subunit to form the 70S initiation complex. This chain is Translation initiation factor 6, found in Pyrococcus furiosus (strain ATCC 43587 / DSM 3638 / JCM 8422 / Vc1).